A 67-amino-acid polypeptide reads, in one-letter code: Ferredoxin (67 aa).

4Fe-4S ferredoxin-type domains follow at residues 3 to 31 (WKVSVDQDTCIGDAICASLCPDVFEMNDE) and 36 to 67 (PKVEVIEDEELYNCAKEAMEACPVSAITIEEA). Positions 12, 15, and 18 each coordinate [4Fe-4S] cluster. The cysteines at positions 22 and 49 are disulfide-linked. A [4Fe-4S] cluster-binding site is contributed by Cys-57.

Homodimer. The cofactor is [4Fe-4S] cluster. [3Fe-4S] cluster serves as cofactor.

Its function is as follows. Ferredoxins are iron-sulfur proteins that transfer electrons in a wide variety of metabolic reactions. The sequence is that of Ferredoxin (fdxA) from Pyrococcus furiosus (strain ATCC 43587 / DSM 3638 / JCM 8422 / Vc1).